Consider the following 167-residue polypeptide: HVA22-like protein b (167 aa).

The next 3 membrane-spanning stretches (helical) occupy residues 18 to 38 (VIAGPVISLVYPLYASVRAIE), 47 to 67 (QWLTYWALYSLIKLFELTFFR), and 68 to 88 (LLEWIPLYPYAKLALTSWLVL).

It belongs to the DP1 family. In terms of tissue distribution, predominantly expressed in flower buds.

The protein localises to the membrane. The chain is HVA22-like protein b (HVA22B) from Arabidopsis thaliana (Mouse-ear cress).